The following is a 257-amino-acid chain: uncharacterized protein (257 aa).

The N-terminal stretch at 1 to 22 (MGYLKRFALYISVMILIFAIAG) is a signal peptide. Residue Cys-23 is the site of N-palmitoyl cysteine attachment. Cys-23 carries the S-diacylglycerol cysteine lipid modification.

It belongs to the staphylococcal tandem lipoprotein family.

It is found in the cell membrane. This is an uncharacterized protein from Staphylococcus aureus (strain USA300).